The chain runs to 203 residues: Dephospho-CoA kinase (203 aa).

Positions 10 to 203 constitute a DPCK domain; that stretch reads IIGITGNIGS…LTGGAKGGRG (194 aa). 18-23 is an ATP binding site; the sequence is GSGKST.

It belongs to the CoaE family.

It localises to the cytoplasm. The catalysed reaction is 3'-dephospho-CoA + ATP = ADP + CoA + H(+). It functions in the pathway cofactor biosynthesis; coenzyme A biosynthesis; CoA from (R)-pantothenate: step 5/5. Functionally, catalyzes the phosphorylation of the 3'-hydroxyl group of dephosphocoenzyme A to form coenzyme A. This chain is Dephospho-CoA kinase, found in Thermus thermophilus (strain ATCC BAA-163 / DSM 7039 / HB27).